The following is a 304-amino-acid chain: Heme A synthase (304 aa).

Topologically, residues 1–8 are cytoplasmic; the sequence is MFNKRNLK. Residues 9-29 traverse the membrane as a helical segment; that stretch reads WLSVLATIIMAFVQLGGALVT. Topologically, residues 30–67 are extracellular; it reads KTGSEDGCGSSWPLCHGALLPQNLPIDTIIELSHRAVS. Cys37 and Cys44 are oxidised to a cystine. Glu60 is an active-site residue. Position 63 (His63) interacts with heme o. A helical membrane pass occupies residues 68–88; it reads GLSLIVVLWLAITAWKHIGYI. Residues 89-93 are Cytoplasmic-facing; that stretch reads REVKP. A helical membrane pass occupies residues 94–114; sequence LAIISIAFLLVQALIGAAAVI. The Extracellular segment spans residues 115-123; sequence WQQNSYVLA. A helical transmembrane segment spans residues 124–144; it reads LHFGISLISFSSVFVLMLIIF. His125 contributes to the heme o binding site. Residues 145–163 lie on the Cytoplasmic side of the membrane; it reads EVDKKYEADELYIRKPLRR. Residues 164–184 form a helical membrane-spanning segment; sequence LTWIMTGIVYLTIYTGALVRH. Residues 185–215 lie on the Extracellular side of the membrane; the sequence is AKASLAYGGWPLPFHDIIPHTEQDWVQFAHR. His214 is a binding site for heme b. Residues 216–236 traverse the membrane as a helical segment; that stretch reads GMAFITFFWIMITFIHAVKNY. The Cytoplasmic segment spans residues 237–244; it reads SENRTIRY. The helical transmembrane segment at 245-265 threads the bilayer; it reads GYTTAFILIILQVITGALSVM. Residues 266–270 lie on the Extracellular side of the membrane; that stretch reads TNVNL. Residues 271 to 291 form a helical membrane-spanning segment; sequence FIALLHALFITILFGMIAYFI. His276 lines the heme b pocket. The Cytoplasmic segment spans residues 292-304; that stretch reads MLMLRTIRSEKIK.

This sequence belongs to the COX15/CtaA family. Type 1 subfamily. Interacts with CtaB. Heme b serves as cofactor.

Its subcellular location is the cell membrane. The enzyme catalyses Fe(II)-heme o + 2 A + H2O = Fe(II)-heme a + 2 AH2. It functions in the pathway porphyrin-containing compound metabolism; heme A biosynthesis; heme A from heme O: step 1/1. Functionally, catalyzes the conversion of heme O to heme A by two successive hydroxylations of the methyl group at C8. The first hydroxylation forms heme I, the second hydroxylation results in an unstable dihydroxymethyl group, which spontaneously dehydrates, resulting in the formyl group of heme A. In Staphylococcus haemolyticus (strain JCSC1435), this protein is Heme A synthase.